The following is a 278-amino-acid chain: Orotidine 5'-phosphate decarboxylase (278 aa).

Substrate-binding positions include D40, 65-67 (KTH), 96-105 (DRKFIDIGNT), Y230, and R248. K98 acts as the Proton donor in catalysis.

Belongs to the OMP decarboxylase family.

The enzyme catalyses orotidine 5'-phosphate + H(+) = UMP + CO2. Its pathway is pyrimidine metabolism; UMP biosynthesis via de novo pathway; UMP from orotate: step 2/2. The polypeptide is Orotidine 5'-phosphate decarboxylase (pyrG) (Penicillium chrysogenum (Penicillium notatum)).